The following is a 209-amino-acid chain: Ribosomal RNA large subunit methyltransferase E (209 aa).

The S-adenosyl-L-methionine site is built by Gly63, Trp65, Asp83, Asp99, and Asp124. Lys164 serves as the catalytic Proton acceptor.

It belongs to the class I-like SAM-binding methyltransferase superfamily. RNA methyltransferase RlmE family.

It is found in the cytoplasm. It catalyses the reaction uridine(2552) in 23S rRNA + S-adenosyl-L-methionine = 2'-O-methyluridine(2552) in 23S rRNA + S-adenosyl-L-homocysteine + H(+). Functionally, specifically methylates the uridine in position 2552 of 23S rRNA at the 2'-O position of the ribose in the fully assembled 50S ribosomal subunit. In Tolumonas auensis (strain DSM 9187 / NBRC 110442 / TA 4), this protein is Ribosomal RNA large subunit methyltransferase E.